Here is a 302-residue protein sequence, read N- to C-terminus: Sulfate adenylyltransferase subunit 2 (302 aa).

This sequence belongs to the PAPS reductase family. CysD subfamily. As to quaternary structure, heterodimer composed of CysD, the smaller subunit, and CysN.

The enzyme catalyses sulfate + ATP + H(+) = adenosine 5'-phosphosulfate + diphosphate. Its pathway is sulfur metabolism; hydrogen sulfide biosynthesis; sulfite from sulfate: step 1/3. With CysN forms the ATP sulfurylase (ATPS) that catalyzes the adenylation of sulfate producing adenosine 5'-phosphosulfate (APS) and diphosphate, the first enzymatic step in sulfur assimilation pathway. APS synthesis involves the formation of a high-energy phosphoric-sulfuric acid anhydride bond driven by GTP hydrolysis by CysN coupled to ATP hydrolysis by CysD. This is Sulfate adenylyltransferase subunit 2 from Zymomonas mobilis subsp. mobilis (strain ATCC 31821 / ZM4 / CP4).